We begin with the raw amino-acid sequence, 206 residues long: Nucleoside triphosphate pyrophosphatase (206 aa).

The active-site Proton acceptor is the aspartate 71.

The protein belongs to the Maf family. A divalent metal cation serves as cofactor.

Its subcellular location is the cytoplasm. It carries out the reaction a ribonucleoside 5'-triphosphate + H2O = a ribonucleoside 5'-phosphate + diphosphate + H(+). The catalysed reaction is a 2'-deoxyribonucleoside 5'-triphosphate + H2O = a 2'-deoxyribonucleoside 5'-phosphate + diphosphate + H(+). Functionally, nucleoside triphosphate pyrophosphatase. May have a dual role in cell division arrest and in preventing the incorporation of modified nucleotides into cellular nucleic acids. This chain is Nucleoside triphosphate pyrophosphatase, found in Rippkaea orientalis (strain PCC 8801 / RF-1) (Cyanothece sp. (strain PCC 8801)).